The chain runs to 531 residues: T-complex protein 1 subunit zeta (531 aa).

Ala-2 bears the N-acetylalanine mark. Lys-5 carries the N6-acetyllysine modification. Gly-39 is a binding site for ADP. Residue Gly-39 coordinates ATP. Asp-90 serves as a coordination point for Mg(2+). The ADP site is built by Gly-91, Thr-92, Thr-93, Ser-94, Thr-158, and Lys-159. ATP-binding residues include Gly-91, Thr-92, and Thr-93. Position 199 is an N6-acetyllysine (Lys-199). Ser-205 is subject to Phosphoserine. Residue Lys-251 forms a Glycyl lysine isopeptide (Lys-Gly) (interchain with G-Cter in SUMO2) linkage. N6-acetyllysine occurs at positions 287, 365, 377, and 388. Ala-411 is a binding site for ADP. ATP is bound by residues Ala-411, Gly-412, Asp-496, and Lys-501. Asp-496 is an ADP binding site.

Belongs to the TCP-1 chaperonin family. In terms of assembly, component of the chaperonin-containing T-complex (TRiC), a hexadecamer composed of two identical back-to-back stacked rings enclosing a protein folding chamber. Each ring is made up of eight different subunits: TCP1/CCT1, CCT2, CCT3, CCT4, CCT5, CCT6A/CCT6, CCT7, CCT8. Interacts with PACRG.

The protein resides in the cytoplasm. The enzyme catalyses ATP + H2O = ADP + phosphate + H(+). Functionally, component of the chaperonin-containing T-complex (TRiC), a molecular chaperone complex that assists the folding of actin, tubulin and other proteins upon ATP hydrolysis. The TRiC complex mediates the folding of WRAP53/TCAB1, thereby regulating telomere maintenance. This Homo sapiens (Human) protein is T-complex protein 1 subunit zeta (CCT6A).